The chain runs to 234 residues: Putative N-acetylmannosamine-6-phosphate 2-epimerase (234 aa).

It belongs to the NanE family.

It catalyses the reaction an N-acyl-D-glucosamine 6-phosphate = an N-acyl-D-mannosamine 6-phosphate. It functions in the pathway amino-sugar metabolism; N-acetylneuraminate degradation; D-fructose 6-phosphate from N-acetylneuraminate: step 3/5. Converts N-acetylmannosamine-6-phosphate (ManNAc-6-P) to N-acetylglucosamine-6-phosphate (GlcNAc-6-P). The chain is Putative N-acetylmannosamine-6-phosphate 2-epimerase from Klebsiella pneumoniae (strain 342).